A 318-amino-acid chain; its full sequence is tRNA dimethylallyltransferase (318 aa).

An ATP-binding site is contributed by 9–16; sequence GATASGKT. 11-16 contacts substrate; it reads TASGKT. Interaction with substrate tRNA regions lie at residues 34 to 37 and 158 to 162; these read DSAQ and QRIIR.

The protein belongs to the IPP transferase family. As to quaternary structure, monomer. Requires Mg(2+) as cofactor.

The enzyme catalyses adenosine(37) in tRNA + dimethylallyl diphosphate = N(6)-dimethylallyladenosine(37) in tRNA + diphosphate. In terms of biological role, catalyzes the transfer of a dimethylallyl group onto the adenine at position 37 in tRNAs that read codons beginning with uridine, leading to the formation of N6-(dimethylallyl)adenosine (i(6)A). This is tRNA dimethylallyltransferase from Dichelobacter nodosus (strain VCS1703A).